The sequence spans 632 residues: Cyclic GMP-AMP synthase-like receptor 2 (632 aa).

Mg(2+) contacts are provided by D71, D73, and D181. D295 lines the Mn(2+) pocket.

Belongs to the mab-21 family. It depends on Mg(2+) as a cofactor. Mn(2+) serves as cofactor.

In terms of biological role, nucleotidyltransferase that catalyzes the formation of some cyclic nucleotide and plays a key role in innate immunity. Directly binds some unknown ligand, activating the nucleotidyltransferase activity, leading to synthesis of a second messenger that binds to and activates Sting, thereby triggering the immune response via activation of the NF-kappa-B transcription factor. This is Cyclic GMP-AMP synthase-like receptor 2 from Crassostrea virginica (Eastern oyster).